The sequence spans 532 residues: Pentatricopeptide repeat-containing protein At4g02820, mitochondrial (532 aa).

Residues 1–28 constitute a mitochondrion transit peptide; that stretch reads MNKNMLVRSARPTLASIHRLFSAAAAAT. The tract at residues 35–56 is disordered; sequence PVVKPRSGGGKGGESANKKETV. PPR repeat units lie at residues 161–195, 196–226, 230–264, 265–295, 300–330, 335–365, 370–404, 405–435, 442–472, and 476–512; these read GHAACTSLLHSYVQNKLSDKAEALFEKMGECGFLK, SCLPYNHMLSMYISRGQFEKVPVLIKELKIR, DIVTYNLWLTAFASGNDVEGAEKVYLKAKEEKLNP, DWVTYSVLTNLYAKTDNVEKARLALKEMEKL, NRVAYASLISLHANLGDKDGVNLTWKKVKSS, NDAEYLSMISAVVKLGEFEQAKGLYDEWESV, DARIPNLILAEYMNRDEVLLGEKFYERIVEKGINP, SYSTWEILTWAYLKRKDMEKVLDCFGKAIDS, NVRLVKGACKELEEQGNVKGAEKLMTLLQKA, and NTQLYNSLLRTYAKAGEMALIVEERMAKDNVELDEET.

This sequence belongs to the PPR family. P subfamily.

The protein localises to the mitochondrion. This chain is Pentatricopeptide repeat-containing protein At4g02820, mitochondrial, found in Arabidopsis thaliana (Mouse-ear cress).